A 283-amino-acid polypeptide reads, in one-letter code: Diaminopimelate epimerase (283 aa).

Positions 13, 45, and 65 each coordinate substrate. Catalysis depends on Cys-74, which acts as the Proton donor. Substrate is bound by residues 75-76 (GN), Asn-156, Asn-190, and 208-209 (ER). Cys-217 (proton acceptor) is an active-site residue. 218–219 (GS) provides a ligand contact to substrate.

The protein belongs to the diaminopimelate epimerase family. As to quaternary structure, homodimer.

Its subcellular location is the cytoplasm. The catalysed reaction is (2S,6S)-2,6-diaminopimelate = meso-2,6-diaminopimelate. Its pathway is amino-acid biosynthesis; L-lysine biosynthesis via DAP pathway; DL-2,6-diaminopimelate from LL-2,6-diaminopimelate: step 1/1. Catalyzes the stereoinversion of LL-2,6-diaminopimelate (L,L-DAP) to meso-diaminopimelate (meso-DAP), a precursor of L-lysine and an essential component of the bacterial peptidoglycan. In Bartonella tribocorum (strain CIP 105476 / IBS 506), this protein is Diaminopimelate epimerase.